Here is a 198-residue protein sequence, read N- to C-terminus: Na(+)-translocating NADH-quinone reductase subunit E (198 aa).

Transmembrane regions (helical) follow at residues 11–31, 35–55, 77–97, 110–130, 140–160, and 176–196; these read SVFIENMALSFFLGMCTFLAV, VSTAFGLGIAVIVVLGIAVPV, FLNFITFIGVIAALVQILEMV, GIFLPLITVNCAIFGGVSFMV, VVYGIGAGTGWMLAIVALAGI, and LGITFITVGLMALGFMSFSGI.

The protein belongs to the NqrDE/RnfAE family. As to quaternary structure, composed of six subunits; NqrA, NqrB, NqrC, NqrD, NqrE and NqrF.

It localises to the cell inner membrane. It catalyses the reaction a ubiquinone + n Na(+)(in) + NADH + H(+) = a ubiquinol + n Na(+)(out) + NAD(+). Functionally, NQR complex catalyzes the reduction of ubiquinone-1 to ubiquinol by two successive reactions, coupled with the transport of Na(+) ions from the cytoplasm to the periplasm. NqrA to NqrE are probably involved in the second step, the conversion of ubisemiquinone to ubiquinol. The chain is Na(+)-translocating NADH-quinone reductase subunit E from Pasteurella multocida (strain Pm70).